A 123-amino-acid chain; its full sequence is Alpha-ketoglutarate dehydrogenase subunit 4, mitochondrial (123 aa).

Residues 1 to 8 (MIATPIRL) constitute a mitochondrion transit peptide.

The protein belongs to the alpha-ketoglutarate dehydrogenase component 4 family. Component of the 2-oxoglutarate dehydrogenase complex (OGDC), also called alpha-ketoglutarate dehydrogenase (KGDH) complex. The copmplex is composed of the catalytic subunits OGDH (2-oxoglutarate dehydrogenase KGD1; also called E1 subunit), DLST (dihydrolipoamide succinyltransferase KGD2; also called E2 subunit) and DLD (dihydrolipoamide dehydrogenase LPD1; also called E3 subunit), and the assembly factor KGD4. Within OGDC, interacts (via N-terminus) with E3 subunit and (via C-terminus) with the complex core formed by E1 and E2 subunits.

The protein resides in the mitochondrion. Its function is as follows. Molecular adapter that is necessary to a form a stable 2-oxoglutarate dehydrogenase enzyme complex (OGDC). Required for incorporation of the E3 subunit (LPD1) into the E1-E2 core (KGD1-KGD2) of mitochondrial OGDC, and acting as a stability factor for the fully assembled complex. The polypeptide is Alpha-ketoglutarate dehydrogenase subunit 4, mitochondrial (Saccharomyces cerevisiae (strain ATCC 204508 / S288c) (Baker's yeast)).